Reading from the N-terminus, the 443-residue chain is Phosphoglucosamine mutase (443 aa).

The Phosphoserine intermediate role is filled by Ser102. The Mg(2+) site is built by Ser102, Asp241, Asp243, and Asp245. Phosphoserine is present on Ser102.

This sequence belongs to the phosphohexose mutase family. It depends on Mg(2+) as a cofactor. In terms of processing, activated by phosphorylation.

The enzyme catalyses alpha-D-glucosamine 1-phosphate = D-glucosamine 6-phosphate. Its function is as follows. Catalyzes the conversion of glucosamine-6-phosphate to glucosamine-1-phosphate. The chain is Phosphoglucosamine mutase from Albidiferax ferrireducens (strain ATCC BAA-621 / DSM 15236 / T118) (Rhodoferax ferrireducens).